The chain runs to 448 residues: Thymidine phosphorylase (448 aa).

The protein belongs to the thymidine/pyrimidine-nucleoside phosphorylase family. As to quaternary structure, homodimer.

The enzyme catalyses thymidine + phosphate = 2-deoxy-alpha-D-ribose 1-phosphate + thymine. Its pathway is pyrimidine metabolism; dTMP biosynthesis via salvage pathway; dTMP from thymine: step 1/2. Its function is as follows. The enzymes which catalyze the reversible phosphorolysis of pyrimidine nucleosides are involved in the degradation of these compounds and in their utilization as carbon and energy sources, or in the rescue of pyrimidine bases for nucleotide synthesis. This Vibrio cholerae serotype O1 (strain ATCC 39315 / El Tor Inaba N16961) protein is Thymidine phosphorylase.